Reading from the N-terminus, the 433-residue chain is Glycoprotein U21 (433 aa).

Topologically, residues 1–364 are lumenal; that stretch reads MMICLVFLCV…SAMLSFAEMT (364 aa). N-linked (GlcNAc...) asparagine; by host glycosylation is present at asparagine 164. The chain crosses the membrane as a helical span at residues 365-385; the sequence is SIILNLMFMGAVAVSVGILGI. The Cytoplasmic segment spans residues 386–433; it reads SCFVGLKEIIYFIFVSVDYMWPFCDTLLTTAVNCFFKGRTFLRRELKI.

Belongs to the herpesviruses U21 family.

The protein resides in the host endoplasmic reticulum membrane. It localises to the host lysosome membrane. Functionally, plays a role in escape from immune detection by associating with and diverting properly folded class I MHC molecules to an endolysosomal compartment, effectively removing them from the cell surface. In consequence, surface class I molecules are down-regulated and infected cells are masked for immune recognition by cytotoxic T lymphocytes. Also plays a role in the down-regulation of the host stress-induced NKG2D ligand UBPL3, which enables immune cells expressing the NKG2D receptor to recognize and annihilate infected cells prior to viral spread. The protein is Glycoprotein U21 (U21) of Homo sapiens (Human).